Reading from the N-terminus, the 563-residue chain is Inositol-3-phosphate synthase 1-A (563 aa).

Belongs to the myo-inositol 1-phosphate synthase family. Requires NAD(+) as cofactor.

The protein localises to the cytoplasm. It catalyses the reaction D-glucose 6-phosphate = 1D-myo-inositol 3-phosphate. It participates in polyol metabolism; myo-inositol biosynthesis; myo-inositol from D-glucose 6-phosphate: step 1/2. Functionally, key enzyme in myo-inositol biosynthesis pathway that catalyzes the conversion of glucose 6-phosphate to 1-myo-inositol 1-phosphate in a NAD-dependent manner. Rate-limiting enzyme in the synthesis of all inositol-containing compounds. In Xenopus laevis (African clawed frog), this protein is Inositol-3-phosphate synthase 1-A (isyna1-a).